Consider the following 122-residue polypeptide: Large ribosomal subunit protein uL14 (122 aa).

It belongs to the universal ribosomal protein uL14 family. As to quaternary structure, part of the 50S ribosomal subunit. Forms a cluster with proteins L3 and L19. In the 70S ribosome, L14 and L19 interact and together make contacts with the 16S rRNA in bridges B5 and B8.

Its function is as follows. Binds to 23S rRNA. Forms part of two intersubunit bridges in the 70S ribosome. This Coxiella burnetii (strain RSA 331 / Henzerling II) protein is Large ribosomal subunit protein uL14.